Reading from the N-terminus, the 188-residue chain is MDLPKDKSDRTHQRINLNNSGTDRTNDLYLHIVQTFGCIETTATENATKLLMLGDVEVEISASSVSIEWTQKSMISQTIADSIVIMIIGLCASDKNVLSESELKERNHNVWKIQELQNLFREQFGDSFSIDEGIGKKENVKNGSVTIGKSKATIDFSTMKLIDCNSNPLKGRVESILSIGQKLTTPLC.

Component of the cleavage and polyadenylation factor (CPF) complex, which is composed of at least PTI1, SYC1, SSU72, GLC7, MPE1, REF2, PFS2, PTA1, YSH1/BRR5, SWD2, CFT2/YDH1, YTH1, CFT1/YHH1, FIP1 and PAP1. Component of the APT complex, which is a subcomplex of CPF, and is composed of PTI1, SYC1, SSU72, GLC7, REF2, PTA1 and SWD2.

The protein localises to the nucleus. Its function is as follows. Component of the cleavage and polyadenylation factor (CPF) complex, which plays a key role in polyadenylation-dependent pre-mRNA 3'-end formation and cooperates with cleavage factors including the CFIA complex and NAB4/CFIB. Component of the APT complex, which may be involved in polyadenylation-independent transcript 3'-end formation, including snoRNAs and snRNAs. The polypeptide is Protein SYC1 (SYC1) (Saccharomyces cerevisiae (strain ATCC 204508 / S288c) (Baker's yeast)).